A 334-amino-acid chain; its full sequence is Methionyl-tRNA formyltransferase (334 aa).

111-114 serves as a coordination point for (6S)-5,6,7,8-tetrahydrofolate; the sequence is SILP.

The protein belongs to the Fmt family.

The enzyme catalyses L-methionyl-tRNA(fMet) + (6R)-10-formyltetrahydrofolate = N-formyl-L-methionyl-tRNA(fMet) + (6S)-5,6,7,8-tetrahydrofolate + H(+). In terms of biological role, attaches a formyl group to the free amino group of methionyl-tRNA(fMet). The formyl group appears to play a dual role in the initiator identity of N-formylmethionyl-tRNA by promoting its recognition by IF2 and preventing the misappropriation of this tRNA by the elongation apparatus. In Gloeothece citriformis (strain PCC 7424) (Cyanothece sp. (strain PCC 7424)), this protein is Methionyl-tRNA formyltransferase.